The following is a 309-amino-acid chain: Cytidine deaminase (309 aa).

2 CMP/dCMP-type deaminase domains span residues 48-168 (DEDA…FGPR) and 200-309 (DDND…SLSL). 89 to 91 (NME) serves as a coordination point for substrate. Residue H102 participates in Zn(2+) binding. Catalysis depends on E104, which acts as the Proton donor. Residues C129 and C132 each coordinate Zn(2+).

It belongs to the cytidine and deoxycytidylate deaminase family. Homodimer. Zn(2+) is required as a cofactor.

The catalysed reaction is cytidine + H2O + H(+) = uridine + NH4(+). The enzyme catalyses 2'-deoxycytidine + H2O + H(+) = 2'-deoxyuridine + NH4(+). This enzyme scavenges exogenous and endogenous cytidine and 2'-deoxycytidine for UMP synthesis. This chain is Cytidine deaminase, found in Sodalis glossinidius (strain morsitans).